The sequence spans 489 residues: Glutamate--tRNA ligase (489 aa).

Positions 11 to 21 (PSPTGHLHIGG) match the 'HIGH' region motif. Cys-108, Cys-110, Cys-136, and His-138 together coordinate Zn(2+). The short motif at 253–257 (KLSKR) is the 'KMSKS' region element. Residue Lys-256 participates in ATP binding.

Belongs to the class-I aminoacyl-tRNA synthetase family. Glutamate--tRNA ligase type 1 subfamily. As to quaternary structure, monomer. The cofactor is Zn(2+).

It localises to the cytoplasm. The catalysed reaction is tRNA(Glu) + L-glutamate + ATP = L-glutamyl-tRNA(Glu) + AMP + diphosphate. Its function is as follows. Catalyzes the attachment of glutamate to tRNA(Glu) in a two-step reaction: glutamate is first activated by ATP to form Glu-AMP and then transferred to the acceptor end of tRNA(Glu). The sequence is that of Glutamate--tRNA ligase from Geobacillus thermodenitrificans (strain NG80-2).